A 423-amino-acid polypeptide reads, in one-letter code: Glucose-1-phosphate adenylyltransferase (423 aa).

Alpha-D-glucose 1-phosphate contacts are provided by residues Y107, G172, 187–188 (EK), and S205.

It belongs to the bacterial/plant glucose-1-phosphate adenylyltransferase family. Homotetramer.

The enzyme catalyses alpha-D-glucose 1-phosphate + ATP + H(+) = ADP-alpha-D-glucose + diphosphate. The protein operates within glycan biosynthesis; glycogen biosynthesis. Functionally, involved in the biosynthesis of ADP-glucose, a building block required for the elongation reactions to produce glycogen. Catalyzes the reaction between ATP and alpha-D-glucose 1-phosphate (G1P) to produce pyrophosphate and ADP-Glc. This chain is Glucose-1-phosphate adenylyltransferase, found in Cereibacter sphaeroides (strain ATCC 17029 / ATH 2.4.9) (Rhodobacter sphaeroides).